Here is a 215-residue protein sequence, read N- to C-terminus: Peptidyl-tRNA hydrolase (215 aa).

Tyr-35 lines the tRNA pocket. His-40 (proton acceptor) is an active-site residue. TRNA-binding residues include Tyr-86, Asn-88, and Asn-134.

The protein belongs to the PTH family. As to quaternary structure, monomer.

It is found in the cytoplasm. It carries out the reaction an N-acyl-L-alpha-aminoacyl-tRNA + H2O = an N-acyl-L-amino acid + a tRNA + H(+). Its function is as follows. Hydrolyzes ribosome-free peptidyl-tRNAs (with 1 or more amino acids incorporated), which drop off the ribosome during protein synthesis, or as a result of ribosome stalling. Functionally, catalyzes the release of premature peptidyl moieties from peptidyl-tRNA molecules trapped in stalled 50S ribosomal subunits, and thus maintains levels of free tRNAs and 50S ribosomes. The polypeptide is Peptidyl-tRNA hydrolase (Bordetella parapertussis (strain 12822 / ATCC BAA-587 / NCTC 13253)).